We begin with the raw amino-acid sequence, 387 residues long: Alkanesulfonate monooxygenase (387 aa).

This sequence belongs to the SsuD family.

The catalysed reaction is an alkanesulfonate + FMNH2 + O2 = an aldehyde + FMN + sulfite + H2O + 2 H(+). Catalyzes the desulfonation of aliphatic sulfonates. This is Alkanesulfonate monooxygenase from Ralstonia pickettii (strain 12J).